Reading from the N-terminus, the 432-residue chain is Glutamate-1-semialdehyde 2,1-aminomutase 1 (432 aa).

Lys268 is modified (N6-(pyridoxal phosphate)lysine).

Belongs to the class-III pyridoxal-phosphate-dependent aminotransferase family. HemL subfamily. Homodimer. It depends on pyridoxal 5'-phosphate as a cofactor.

Its subcellular location is the cytoplasm. The catalysed reaction is (S)-4-amino-5-oxopentanoate = 5-aminolevulinate. It participates in porphyrin-containing compound metabolism; protoporphyrin-IX biosynthesis; 5-aminolevulinate from L-glutamyl-tRNA(Glu): step 2/2. This Bacillus cereus (strain ZK / E33L) protein is Glutamate-1-semialdehyde 2,1-aminomutase 1.